The primary structure comprises 435 residues: Eukaryotic translation initiation factor 3 subunit E (435 aa).

Residues 219-392 enclose the PCI domain; it reads FFNHPKGRDL…GHVVMGTQPL (174 aa).

It belongs to the eIF-3 subunit E family. As to quaternary structure, component of the eukaryotic translation initiation factor 3 (eIF-3) complex. The eIF-3 complex interacts with pix. Interacts with mxt. Expression levels in females and males are relatively similar 10 days after oviposition, however by day 15 expression is higher in gravid females than in males (at protein level).

The protein localises to the cytoplasm. Its subcellular location is the microsome. It is found in the endoplasmic reticulum. Component of the eukaryotic translation initiation factor 3 (eIF-3) complex, which is involved in protein synthesis of a specialized repertoire of mRNAs and, together with other initiation factors, stimulates binding of mRNA and methionyl-tRNAi to the 40S ribosome. The eIF-3 complex specifically targets and initiates translation of a subset of mRNAs involved in cell proliferation. In addition to its role in the eIF-3 complex, also functions in protein ubiquitination and degradation. During mitosis required for regulating mitotic microtubule growth and kinetochore formation, and consequently is required for satisfying the spindle assembly checkpoint (SAC) during metaphase to prevent delays in mitotic progression. This is likely by promoting the ubiquitination and degradation of Klp67A, a kinesin-like protein that suppresses microtubule polymerization at plus ends. Acts in the COP9 signalosome (CSN) mediated regulation of cullin neddylation by promoting Cul1 and Cul3 neddylation and negatively regulating the CSN complex subunit CSN5. The chain is Eukaryotic translation initiation factor 3 subunit E from Drosophila melanogaster (Fruit fly).